Reading from the N-terminus, the 521-residue chain is Cyclic AMP-responsive element-binding protein 3-like protein 2 (521 aa).

At 1 to 378 (MEVLESGEQS…CKLAGTQTGT (378 aa)) the chain is on the cytoplasmic side. Phosphoserine is present on Ser93. A Glycyl lysine isopeptide (Lys-Gly) (interchain with G-Cter in SUMO2) cross-link involves residue Lys178. Ser191 carries the post-translational modification Phosphoserine. The disordered stretch occupies residues 196 to 264 (SVDQLHLPPT…PHKLQGSGPL (69 aa)). Residues 208–220 (SSHSSDSEGSLSP) are compositionally biased toward low complexity. One can recognise a bZIP domain in the interval 294–357 (ALKKIRRKIK…RTLLQQLQKL (64 aa)). The basic motif stretch occupies residues 296-325 (KKIRRKIKNKISAQESRRKKKEYMDSLEKK). Residues 336–357 (LRKKVEVLENTNRTLLQQLQKL) are leucine-zipper. The helical; Signal-anchor for type II membrane protein transmembrane segment at 379 to 399 (CLMVVVLCFAVAFGSLFQGYG) threads the bilayer. At 400–521 (LYPSATKMAL…ELERRVNATF (122 aa)) the chain is on the lumenal side. The S1P recognition signature appears at 427-430 (RNLL). N-linked (GlcNAc...) asparagine glycans are attached at residues Asn505 and Asn518.

It belongs to the bZIP family. ATF subfamily. Binds DNA as a dimer. In terms of processing, upon ER stress, translocated to the Golgi apparatus, where it is processed by regulated intramembrane proteolysis (RIP) to release the cytosol-facing N-terminal transcription factor domain. The cleavage is performed sequentially by site-1 and site-2 proteases (S1P/MBTPS1 and S2P/MBTPS2). N-glycosylated. Post-translationally, ubiquitinated by HRD1/SYVN1; undergoes 'Lys-48'-linked ubiquitination, followed by rapid proteasomal degradation under normal conditions. Upon ER stress, SYVN1 E3 ubiquitin-protein ligase dissociates from its substrate, ubiquitination does not occur and CREB3L2 is stabilized.

The protein localises to the endoplasmic reticulum membrane. It is found in the nucleus. Transcription factor involved in unfolded protein response (UPR). In the absence of endoplasmic reticulum (ER) stress, inserted into ER membranes, with N-terminal DNA-binding and transcription activation domains oriented toward the cytosolic face of the membrane. In response to ER stress, transported to the Golgi, where it is cleaved in a site-specific manner by resident proteases S1P/MBTPS1 and S2P/MBTPS2. The released N-terminal cytosolic domain is translocated to the nucleus to effect transcription of specific target genes. Plays a critical role in chondrogenesis by activating the transcription of SEC23A, which promotes the transport and secretion of cartilage matrix proteins, and possibly that of ER biogenesis-related genes. In a neuroblastoma cell line, protects cells from ER stress-induced death. In vitro activates transcription of target genes via direct binding to the CRE site. The chain is Cyclic AMP-responsive element-binding protein 3-like protein 2 (Creb3l2) from Rattus norvegicus (Rat).